A 115-amino-acid polypeptide reads, in one-letter code: Large ribosomal subunit protein bL20 (115 aa).

This sequence belongs to the bacterial ribosomal protein bL20 family.

Its function is as follows. Binds directly to 23S ribosomal RNA and is necessary for the in vitro assembly process of the 50S ribosomal subunit. It is not involved in the protein synthesizing functions of that subunit. This Myxococcus xanthus (strain DK1622) protein is Large ribosomal subunit protein bL20.